A 368-amino-acid polypeptide reads, in one-letter code: MRKYRIIISGGGTGGHIFPAISIANTFKKRFPDAEILFVGAEDRMEMDKVPAAGYKIVGLPVSGFDRAHLMNNVKVMVRLAKSLRLARKTIREFKPDIAVGVGGYASGPTLWMAASQGVPALIQEQNSYAGVTNKLLAKKASKICVAYEGMEKFFPADKIVITGNPVRQDLEEALSKKEEALAFFGLSPEKKTILVVGGSLGARTINRSIQGDLDKFFASDVQVIWQTGRYYYSDASKHLKAYRGMPVWCSDFITRMDYAYSAADLVISRAGASSISELCLLGKPVVLVPSPNVAEDHQTKNALALVHKDAAVMIADKDAEKDLVPTALKIVHDDERLCTLSRNIETLAQRHSADRIVDEIVKIIDKK.

Residues 13 to 15 (TGG), N127, R168, S200, I254, and Q299 each bind UDP-N-acetyl-alpha-D-glucosamine.

The protein belongs to the glycosyltransferase 28 family. MurG subfamily.

The protein localises to the cell inner membrane. The enzyme catalyses di-trans,octa-cis-undecaprenyl diphospho-N-acetyl-alpha-D-muramoyl-L-alanyl-D-glutamyl-meso-2,6-diaminopimeloyl-D-alanyl-D-alanine + UDP-N-acetyl-alpha-D-glucosamine = di-trans,octa-cis-undecaprenyl diphospho-[N-acetyl-alpha-D-glucosaminyl-(1-&gt;4)]-N-acetyl-alpha-D-muramoyl-L-alanyl-D-glutamyl-meso-2,6-diaminopimeloyl-D-alanyl-D-alanine + UDP + H(+). It participates in cell wall biogenesis; peptidoglycan biosynthesis. Cell wall formation. Catalyzes the transfer of a GlcNAc subunit on undecaprenyl-pyrophosphoryl-MurNAc-pentapeptide (lipid intermediate I) to form undecaprenyl-pyrophosphoryl-MurNAc-(pentapeptide)GlcNAc (lipid intermediate II). The sequence is that of UDP-N-acetylglucosamine--N-acetylmuramyl-(pentapeptide) pyrophosphoryl-undecaprenol N-acetylglucosamine transferase from Parabacteroides distasonis (strain ATCC 8503 / DSM 20701 / CIP 104284 / JCM 5825 / NCTC 11152).